A 21-amino-acid chain; its full sequence is Pollen allergen Ole e 7 (21 aa).

The chain is Pollen allergen Ole e 7 from Olea europaea (Common olive).